The sequence spans 352 residues: Pejvakin (352 aa).

The protein belongs to the gasdermin family. In terms of assembly, interacts with MAP1LC3B; interaction is direct. Interacts with IQGAP1. Interacts with ROCK2. Interacts with TRIOBP.

Its subcellular location is the peroxisome membrane. It localises to the cell projection. The protein localises to the cilium. Functionally, peroxisome-associated protein required to protect auditory hair cells against noise-induced damage. Acts by regulating noise-induced peroxisome proliferation in auditory hair cells and neurons, and promoting autophagic degradation of damaged peroxisomes (pexophagy). Noise overexposure increases reactive oxygen species (ROS) levels, causing oxidative damage to auditory hair cells and resulting in hearing loss. PJVK acts as a ROS sensor that recruits the autophagy machinery to trigger pexophagy of peroxisomes damaged by oxidative stress. In addition to pexophagy, also required to promote peroxisome proliferation in response to sound overstimulation. This is Pejvakin from Homo sapiens (Human).